The chain runs to 387 residues: Sorting nexin-7 (387 aa).

One can recognise a PX domain in the interval 30-151; that stretch reads KDLFITVDEP…IFLTAQAWEL (122 aa). A 1,2-diacyl-sn-glycero-3-phospho-(1D-myo-inositol-3-phosphate)-binding residues include Arg-73, Gln-75, Lys-103, and Arg-117. One can recognise a BAR domain in the interval 178–387; sequence GVKNRPEEFM…HLEEASEDKP (210 aa).

This sequence belongs to the sorting nexin family. Heterodimer; heterodimerizes with SNX4.

The protein resides in the early endosome membrane. Involved in the regulation of endocytosis and in several stages of intracellular trafficking. Together with SNX4, involved in autophagosome assembly by regulating trafficking and recycling of phospholipid scramblase ATG9A. This chain is Sorting nexin-7, found in Homo sapiens (Human).